Reading from the N-terminus, the 563-residue chain is Inclusion membrane protein M (563 aa).

Topologically, residues 1–36 (MVYFRAHQPRHTPKTFPLEVHHSFSDKHPQIAKAMR) are cytoplasmic. A helical transmembrane segment spans residues 37–57 (ITGIALAALSLLAVVACVIAV). Residue S58 is a topological domain, vacuolar. A helical transmembrane segment spans residues 59-79 (AGGAAIPLAVISGIAVMSGLL). The Cytoplasmic portion of the chain corresponds to 80–252 (SAATIICSAK…VLKVALSLGV (173 aa)). The helical transmembrane segment at 253–273 (LAGVAALIIFLPPSLPFIAVI) threads the bilayer. A topological domain (vacuolar) is located at residue G274. Residues 275–295 (VSSLALGMASFLMIRGIKYLL) traverse the membrane as a helical segment. The Cytoplasmic segment spans residues 296-563 (EHSPLNRKQL…QLAQYLLDNH (268 aa)).

The protein belongs to the chlamydial CPn_0065/CT_288/TC_0561 family. In terms of assembly, interacts with host CCDC146. In host cells infected with C.trachomatis incM, CCDC146 is recruited to the periphery of the pathogen-containing vacuole but recruitment is not dependent on incM.

Its subcellular location is the host vacuole. The protein resides in the host pathogen-containing vacuole. It is found in the host pathogen-containing vacuole membrane. The protein localises to the host pathogen-containing vacuole lumen. It localises to the secreted. Interferes with host cell cytokinesis, centrosome positioning and Golgi distribution, and contributes to the morphology and stability of the pathogen-containing vacuole. May exert its effects by acting directly or indirectly on host microtubules. This is Inclusion membrane protein M from Chlamydia trachomatis serovar D (strain ATCC VR-885 / DSM 19411 / UW-3/Cx).